Reading from the N-terminus, the 112-residue chain is Integration host factor subunit alpha (112 aa).

This sequence belongs to the bacterial histone-like protein family. Heterodimer of an alpha and a beta chain.

This protein is one of the two subunits of integration host factor, a specific DNA-binding protein that functions in genetic recombination as well as in transcriptional and translational control. The chain is Integration host factor subunit alpha from Rhizobium etli (strain CIAT 652).